A 906-amino-acid polypeptide reads, in one-letter code: Patched domain-containing protein 3 (906 aa).

Residues 1–70 (MISSKVAPGE…LGQEAPPPRR (70 aa)) form a disordered region. Residues asparagine 148 and asparagine 235 are each glycosylated (N-linked (GlcNAc...) asparagine). The next 11 helical transmembrane spans lie at 338–358 (TVIP…VVSC), 370–390 (VAVF…GLML), 392–412 (LGVP…GVGV), 442–462 (VAVS…TGIT), 476–496 (GTTL…VMAL), 559–579 (FIVV…CFQV), 760–780 (VMIA…HPVC), 782–802 (LWVT…MAFW), 814–834 (LVIC…AFVS), 848–868 (LYLL…GVCV), and 883–903 (IMFL…PVFL). Residues 339–496 (VIPLFHLAYI…ITCFGAVMAL (158 aa)) enclose the SSD domain.

Belongs to the patched family. As to expression, expressed in germ cells of the testis (at protein level).

Its subcellular location is the cell projection. The protein resides in the cilium. It is found in the flagellum membrane. The protein localises to the endoplasmic reticulum membrane. Its function is as follows. May play a role in sperm development or sperm function. However, does not appear to have an essential role in spermatogenesis or male fertility. The sequence is that of Patched domain-containing protein 3 (Ptchd3) from Mus musculus (Mouse).